The chain runs to 299 residues: MEPINAAIVGPGNIGTDLLAKLERVDSIAVQYVVGVVESDGLERARAKGISASAGGVDWLLEQDPLPEIVFEATSAKAHQLNAPRYHELNIQAVDLTPAHIGPMVCPPVNLTHHIDAPNVSMITCGGQATIPMVHAVSRVSAVPYAEIVASVASRGAGPGTRANIDEFTQTTGQAVSEVGGAARGRAIIILNPMEPPMIMRDTVYCMIDADADRDAISESVHRMVTEVQAYVPGYRLRADPQFDDPKDGWDGHGRVAIFLEVEGNGDYLPKYAGNLDIMTAAAARVGDSIARNRMGVPA.

The active-site Acyl-thioester intermediate is cysteine 125. NAD(+) is bound by residues 156-164 (GAGPGTRAN) and asparagine 275.

Belongs to the acetaldehyde dehydrogenase family.

It catalyses the reaction acetaldehyde + NAD(+) + CoA = acetyl-CoA + NADH + H(+). In Rhodococcus jostii (strain RHA1), this protein is Acetaldehyde dehydrogenase 6 (hpdG).